The primary structure comprises 326 residues: uncharacterized protein (326 aa).

This is an uncharacterized protein from Escherichia coli (strain K12).